The sequence spans 157 residues: Large ribosomal subunit protein eL29 (157 aa).

Basic residues predominate over residues 1 to 26 (MAKSKNHTTHNQSRKWHRNGIKKPRS). Residues 1–32 (MAKSKNHTTHNQSRKWHRNGIKKPRSQRYESL) form a disordered region. Position 5 is an N6-methyllysine (Lys5). Ser31 carries the phosphoserine modification. An N6-acetyllysine modification is found at Lys33. The tract at residues 121-157 (PKAKAKAKDQTKAQAAAPASIPAQAPKGAQATTKATE) is disordered. The span at 132–147 (KAQAAAPASIPAQAPK) shows a compositional bias: low complexity. Ser140 is modified (phosphoserine).

This sequence belongs to the eukaryotic ribosomal protein eL29 family. In terms of assembly, component of the large ribosomal subunit.

It localises to the cytoplasm. Its function is as follows. Component of the large ribosomal subunit. The ribosome is a large ribonucleoprotein complex responsible for the synthesis of proteins in the cell. This is Large ribosomal subunit protein eL29 (RPL29) from Macaca fascicularis (Crab-eating macaque).